The primary structure comprises 801 residues: Na(+)/H(+) antiporter subunit A1 (801 aa).

The next 19 helical transmembrane spans lie at 1-21 (MSLLHIAVILPLIFVLIIPIL), 28-48 (IHLGWFVLPVPIVIFIYMLTL), 79-99 (LGLLFSLLISGIGSLVVLYSI), 117-137 (LFMGAMLGVVLSDNVIILYLF), 166-186 (LIITVFGGLSLLGGIILLAIP), 206-226 (PFFIFAMILIMIGAFTKSAQF), 265-285 (IFAASQGWIWTVTLVGLITLF), 300-320 (ILAFSTVSQLGMIMAMLGIGA), 337-357 (FTAAIFHLINHATFKGALFMI), 373-393 (LGGLLTIMPISFTITVITALS), 427-447 (LGYLFPIIGIVGSVFTFVYSI), 472-492 (ILMLLSPAILATLVIVFGLFP), 522-542 (GLTPAFLSTLVIYILGILLIV), 591-611 (LVIIFGALILLTFVTVFSVPF), 623-643 (IFEVCIVILLLSAAFLILFAK), 646-666 (LFNIIMLSAVGYAVSVLFIFF), 671-691 (LALTQFVVESISTALFLLCFY), 707-727 (LTNALIAGGVGLSVIIIGLIA), and 764-784 (MDTLFESSVLGIAGLAVYTMI).

Belongs to the CPA3 antiporters (TC 2.A.63) subunit A family. As to quaternary structure, may form a heterooligomeric complex that consists of seven subunits: mnhA1, mnhB1, mnhC1, mnhD1, mnhE1, mnhF1 and mnhG1.

The protein localises to the cell membrane. Its function is as follows. Mnh complex is a Na(+)/H(+) antiporter involved in Na(+) excretion. The chain is Na(+)/H(+) antiporter subunit A1 (mnhA1) from Staphylococcus aureus (strain bovine RF122 / ET3-1).